The chain runs to 166 residues: Seed allergenic protein RAG2 (166 aa).

Residues 1–26 (MASNKVVFSALLLIIVSVLAATATMA) form the signal peptide. Intrachain disulfides connect cysteine 41–cysteine 93, cysteine 55–cysteine 81, cysteine 63–cysteine 125, cysteine 82–cysteine 141, and cysteine 95–cysteine 153. Asparagine 147 carries N-linked (GlcNAc...) asparagine glycosylation.

It belongs to the cereal trypsin/alpha-amylase inhibitor family. Five disulfide bonds are present.

Its subcellular location is the secreted. Functionally, seed storage protein. This chain is Seed allergenic protein RAG2 (RAG2), found in Oryza sativa subsp. japonica (Rice).